The sequence spans 245 residues: 4-hydroxy-tetrahydrodipicolinate reductase (245 aa).

NAD(+) contacts are provided by residues 7–12, 75–77, and 102–105; these read GAKGKV, GTT, and APNF. His132 (proton donor/acceptor) is an active-site residue. His133 contacts (S)-2,3,4,5-tetrahydrodipicolinate. Lys136 (proton donor) is an active-site residue. (S)-2,3,4,5-tetrahydrodipicolinate is bound at residue 142 to 143; sequence GT.

This sequence belongs to the DapB family.

The protein localises to the cytoplasm. It catalyses the reaction (S)-2,3,4,5-tetrahydrodipicolinate + NAD(+) + H2O = (2S,4S)-4-hydroxy-2,3,4,5-tetrahydrodipicolinate + NADH + H(+). The enzyme catalyses (S)-2,3,4,5-tetrahydrodipicolinate + NADP(+) + H2O = (2S,4S)-4-hydroxy-2,3,4,5-tetrahydrodipicolinate + NADPH + H(+). The protein operates within amino-acid biosynthesis; L-lysine biosynthesis via DAP pathway; (S)-tetrahydrodipicolinate from L-aspartate: step 4/4. Catalyzes the conversion of 4-hydroxy-tetrahydrodipicolinate (HTPA) to tetrahydrodipicolinate. The sequence is that of 4-hydroxy-tetrahydrodipicolinate reductase from Mycobacterium sp. (strain JLS).